The primary structure comprises 351 residues: MVEPYSQQKQIQQVVYRILDANLDRAREGLRIIEEWCRFGLNSGQLAGECKYLRQEVAVWHTEELRAARDTAGDPGTDLSHPQEEQRSSIKALLQANFCRVEEALRVLEEYGKLYHPKMGQACKQMRYRVYSLETNLMGHQRHQLLRRSRLYLVTSPSESLLPTVEAALKGGLTLLQYRDKDTDDFVRLELATKLRQLCHSYGALFIINDRVDLALAVDADGVHLGQQDMPIATARQLLGPQRLIGRSTTNADEMQKAIAEGADYIGVGPVYETPTKIGKAAAGLGYVSYAAQHSSVPWFAIGGIDANNINDVIDAGAERVAVVRSLMQAEQPTLVTQYLISQLNRIKPES.

Positions 1-129 are unknown; that stretch reads MVEPYSQQKQ…GQACKQMRYR (129 aa). Residues 130 to 351 are thiamine-phosphate synthase; sequence VYSLETNLMG…SQLNRIKPES (222 aa). 4-amino-2-methyl-5-(diphosphooxymethyl)pyrimidine-binding positions include 177–181 and N209; that span reads QYRDK. 2 residues coordinate Mg(2+): D210 and D229. S248 serves as a coordination point for 4-amino-2-methyl-5-(diphosphooxymethyl)pyrimidine. 274–276 is a 2-[(2R,5Z)-2-carboxy-4-methylthiazol-5(2H)-ylidene]ethyl phosphate binding site; it reads TPT. 4-amino-2-methyl-5-(diphosphooxymethyl)pyrimidine is bound at residue K277. G304 provides a ligand contact to 2-[(2R,5Z)-2-carboxy-4-methylthiazol-5(2H)-ylidene]ethyl phosphate.

It belongs to the thiamine-phosphate synthase family. The cofactor is Mg(2+).

The enzyme catalyses 2-[(2R,5Z)-2-carboxy-4-methylthiazol-5(2H)-ylidene]ethyl phosphate + 4-amino-2-methyl-5-(diphosphooxymethyl)pyrimidine + 2 H(+) = thiamine phosphate + CO2 + diphosphate. The catalysed reaction is 2-(2-carboxy-4-methylthiazol-5-yl)ethyl phosphate + 4-amino-2-methyl-5-(diphosphooxymethyl)pyrimidine + 2 H(+) = thiamine phosphate + CO2 + diphosphate. It carries out the reaction 4-methyl-5-(2-phosphooxyethyl)-thiazole + 4-amino-2-methyl-5-(diphosphooxymethyl)pyrimidine + H(+) = thiamine phosphate + diphosphate. Its pathway is cofactor biosynthesis; thiamine diphosphate biosynthesis; thiamine phosphate from 4-amino-2-methyl-5-diphosphomethylpyrimidine and 4-methyl-5-(2-phosphoethyl)-thiazole: step 1/1. Condenses 4-methyl-5-(beta-hydroxyethyl)thiazole monophosphate (THZ-P) and 2-methyl-4-amino-5-hydroxymethyl pyrimidine pyrophosphate (HMP-PP) to form thiamine monophosphate (TMP). In Nostoc sp. (strain PCC 7120 / SAG 25.82 / UTEX 2576), this protein is Thiamine-phosphate synthase.